The following is a 197-amino-acid chain: Imidazoleglycerol-phosphate dehydratase (197 aa).

This sequence belongs to the imidazoleglycerol-phosphate dehydratase family.

It localises to the cytoplasm. The catalysed reaction is D-erythro-1-(imidazol-4-yl)glycerol 3-phosphate = 3-(imidazol-4-yl)-2-oxopropyl phosphate + H2O. It participates in amino-acid biosynthesis; L-histidine biosynthesis; L-histidine from 5-phospho-alpha-D-ribose 1-diphosphate: step 6/9. The chain is Imidazoleglycerol-phosphate dehydratase from Syntrophus aciditrophicus (strain SB).